Here is a 747-residue protein sequence, read N- to C-terminus: Elongation factor G, mitochondrial (747 aa).

Residues 1–16 (MSLIMRVLNGNLSLRL) constitute a mitochondrion transit peptide. The 278-residue stretch at 42 to 319 (ERIRNIGISA…AIIDYLPNPG (278 aa)) folds into the tr-type G domain. GTP-binding positions include 51–58 (AHIDSGKT), 118–122 (DTPGH), and 172–175 (NKLD).

The protein belongs to the TRAFAC class translation factor GTPase superfamily. Classic translation factor GTPase family. EF-G/EF-2 subfamily.

Its subcellular location is the mitochondrion. The protein operates within protein biosynthesis; polypeptide chain elongation. Functionally, mitochondrial GTPase that catalyzes the GTP-dependent ribosomal translocation step during translation elongation. During this step, the ribosome changes from the pre-translocational (PRE) to the post-translocational (POST) state as the newly formed A-site-bound peptidyl-tRNA and P-site-bound deacylated tRNA move to the P and E sites, respectively. Catalyzes the coordinated movement of the two tRNA molecules, the mRNA and conformational changes in the ribosome. Essential during development as it acts as a retrograde signal from mitochondria to the nucleus to slow down cell proliferation if mitochondrial energy output is low. The polypeptide is Elongation factor G, mitochondrial (Drosophila grimshawi (Hawaiian fruit fly)).